Reading from the N-terminus, the 230-residue chain is MLLHIPTILSRTQATSMQERLAAANWTDGRETVGPQGAQVKHNLQLPETSPLRQELGNEILDALARSPLYFAATLPLRTLPPRFNCYQENHQYGFHVDGAVMSLPIAPGHTPASLRSDISCTLFLNDPDEYEGGELIIADTYGEHEVKLPAGDLIIYPSTSLHRVAPVTRGMRIASFFWVQSLVRQATHRHQLLELDTAIQSLTASNTDHNTILRLTNIYHNLLREWSET.

The 105-residue stretch at 78-182 (RTLPPRFNCY…RIASFFWVQS (105 aa)) folds into the Fe2OG dioxygenase domain. Positions 96, 98, and 163 each coordinate Fe cation. R173 contacts 2-oxoglutarate.

Requires Fe(2+) as cofactor. The cofactor is L-ascorbate.

This is PKHD-type hydroxylase XF_0598 from Xylella fastidiosa (strain 9a5c).